Here is a 151-residue protein sequence, read N- to C-terminus: MSLQFNSIALLLVSLILLGVLGNNSSITISATILLLMQQTFLAKYIPFTEKYGVNIGIIILTIGVLSPIVSGKVQLPNWTALIHWKMFLAMAVGVLVAWFGGRGVNLMGTQPSLLTGLLVGTILGVAFLGGVPVGPLIAAGILSLFIGKTG.

The next 4 membrane-spanning stretches (helical) occupy residues 1–21 (MSLQ…LGVL), 52–72 (YGVN…IVSG), 81–101 (ALIH…AWFG), and 123–143 (ILGV…AGIL).

Belongs to the UPF0756 family.

The protein localises to the cell membrane. This Histophilus somni (strain 129Pt) (Haemophilus somnus) protein is UPF0756 membrane protein HS_0993.